The following is a 546-amino-acid chain: Probable protein kinase UbiB (546 aa).

In terms of domain architecture, Protein kinase spans 123–501 (DFQEIPLASA…RTNHGQALFL (379 aa)). ATP contacts are provided by residues 129–137 (LASASISQV) and K152. The Proton acceptor role is filled by D287. The next 2 helical transmembrane spans lie at 497-517 (QALF…FLYI) and 521-541 (YLKI…TIGW).

It belongs to the ABC1 family. UbiB subfamily.

The protein localises to the cell inner membrane. It participates in cofactor biosynthesis; ubiquinone biosynthesis [regulation]. Is probably a protein kinase regulator of UbiI activity which is involved in aerobic coenzyme Q (ubiquinone) biosynthesis. This is Probable protein kinase UbiB from Blochmanniella pennsylvanica (strain BPEN).